The chain runs to 545 residues: CTP synthase (545 aa).

Residues 1 to 266 are amidoligase domain; that stretch reads MTHFIFVTGG…DDLICERFGF (266 aa). Position 13 (Ser-13) interacts with CTP. Position 13 (Ser-13) interacts with UTP. Residues 14–19 and Asp-71 each bind ATP; that span reads SLGKGI. The Mg(2+) site is built by Asp-71 and Glu-140. CTP is bound by residues 147-149, 187-192, and Lys-223; these read DIE and KTKPTQ. UTP-binding positions include 187-192 and Lys-223; that span reads KTKPTQ. 239 to 241 contacts ATP; sequence KDA. Residues 292 to 543 form the Glutamine amidotransferase type-1 domain; that stretch reads RVAMVGKYVE…IDAAKTQHQK (252 aa). Residue Gly-353 participates in L-glutamine binding. The active-site Nucleophile; for glutamine hydrolysis is Cys-380. L-glutamine contacts are provided by residues 381–384, Glu-404, and Arg-471; that span reads LGMQ. Active-site residues include His-516 and Glu-518.

The protein belongs to the CTP synthase family. Homotetramer.

The catalysed reaction is UTP + L-glutamine + ATP + H2O = CTP + L-glutamate + ADP + phosphate + 2 H(+). It carries out the reaction L-glutamine + H2O = L-glutamate + NH4(+). It catalyses the reaction UTP + NH4(+) + ATP = CTP + ADP + phosphate + 2 H(+). It participates in pyrimidine metabolism; CTP biosynthesis via de novo pathway; CTP from UDP: step 2/2. Its activity is regulated as follows. Allosterically activated by GTP, when glutamine is the substrate; GTP has no effect on the reaction when ammonia is the substrate. The allosteric effector GTP functions by stabilizing the protein conformation that binds the tetrahedral intermediate(s) formed during glutamine hydrolysis. Inhibited by the product CTP, via allosteric rather than competitive inhibition. Its function is as follows. Catalyzes the ATP-dependent amination of UTP to CTP with either L-glutamine or ammonia as the source of nitrogen. Regulates intracellular CTP levels through interactions with the four ribonucleotide triphosphates. The chain is CTP synthase from Acinetobacter baumannii (strain AB307-0294).